The sequence spans 81 residues: Photosystem I iron-sulfur center (81 aa).

2 4Fe-4S ferredoxin-type domains span residues 2–31 (SHAVKIYDTCIGCTQCVRACPLDVLEMVPW) and 37–68 (GQIASSPRTEDCVGCKRCETACPTDFLSIRVY). C11, C14, C17, C21, C48, C51, C54, and C58 together coordinate [4Fe-4S] cluster.

The cyanobacterial PSI reaction center is composed of one copy each of PsaA,B,C,D,E,F,I,J,K,L,M and X, and forms trimeric complexes. [4Fe-4S] cluster is required as a cofactor.

The protein resides in the cellular thylakoid membrane. The catalysed reaction is reduced [plastocyanin] + hnu + oxidized [2Fe-2S]-[ferredoxin] = oxidized [plastocyanin] + reduced [2Fe-2S]-[ferredoxin]. Apoprotein for the two 4Fe-4S centers FA and FB of photosystem I (PSI); essential for photochemical activity. FB is the terminal electron acceptor of PSI, donating electrons to ferredoxin. The C-terminus interacts with PsaA/B/D and helps assemble the protein into the PSI complex. Required for binding of PsaD and PsaE to PSI. PSI is a plastocyanin/cytochrome c6-ferredoxin oxidoreductase, converting photonic excitation into a charge separation, which transfers an electron from the donor P700 chlorophyll pair to the spectroscopically characterized acceptors A0, A1, FX, FA and FB in turn. The sequence is that of Photosystem I iron-sulfur center from Prochlorococcus marinus subsp. pastoris (strain CCMP1986 / NIES-2087 / MED4).